We begin with the raw amino-acid sequence, 375 residues long: tRNA-specific 2-thiouridylase MnmA 3 (375 aa).

ATP contacts are provided by residues 11–18 (GMSGGIDS) and M37. C104 acts as the Nucleophile in catalysis. The cysteines at positions 104 and 201 are disulfide-linked. G128 is an ATP binding site. The tract at residues 150 to 152 (KDQ) is interaction with tRNA. C201 (cysteine persulfide intermediate) is an active-site residue. Residues 309-310 (RY) form an interaction with tRNA region.

The protein belongs to the MnmA/TRMU family.

It localises to the cytoplasm. The catalysed reaction is S-sulfanyl-L-cysteinyl-[protein] + uridine(34) in tRNA + AH2 + ATP = 2-thiouridine(34) in tRNA + L-cysteinyl-[protein] + A + AMP + diphosphate + H(+). Catalyzes the 2-thiolation of uridine at the wobble position (U34) of tRNA, leading to the formation of s(2)U34. This Phocaeicola vulgatus (strain ATCC 8482 / DSM 1447 / JCM 5826 / CCUG 4940 / NBRC 14291 / NCTC 11154) (Bacteroides vulgatus) protein is tRNA-specific 2-thiouridylase MnmA 3.